A 204-amino-acid chain; its full sequence is Leucyl/phenylalanyl-tRNA--protein transferase (204 aa).

The protein belongs to the L/F-transferase family.

It localises to the cytoplasm. It catalyses the reaction N-terminal L-lysyl-[protein] + L-leucyl-tRNA(Leu) = N-terminal L-leucyl-L-lysyl-[protein] + tRNA(Leu) + H(+). It carries out the reaction N-terminal L-arginyl-[protein] + L-leucyl-tRNA(Leu) = N-terminal L-leucyl-L-arginyl-[protein] + tRNA(Leu) + H(+). The enzyme catalyses L-phenylalanyl-tRNA(Phe) + an N-terminal L-alpha-aminoacyl-[protein] = an N-terminal L-phenylalanyl-L-alpha-aminoacyl-[protein] + tRNA(Phe). Functionally, functions in the N-end rule pathway of protein degradation where it conjugates Leu, Phe and, less efficiently, Met from aminoacyl-tRNAs to the N-termini of proteins containing an N-terminal arginine or lysine. The sequence is that of Leucyl/phenylalanyl-tRNA--protein transferase from Agrobacterium fabrum (strain C58 / ATCC 33970) (Agrobacterium tumefaciens (strain C58)).